Consider the following 286-residue polypeptide: Phosphatidylserine decarboxylase proenzyme (286 aa).

Catalysis depends on charge relay system; for autoendoproteolytic cleavage activity residues Asp-90, His-147, and Ser-250. Ser-250 acts as the Schiff-base intermediate with substrate; via pyruvic acid; for decarboxylase activity in catalysis. Ser-250 is subject to Pyruvic acid (Ser); by autocatalysis.

Belongs to the phosphatidylserine decarboxylase family. PSD-B subfamily. Prokaryotic type I sub-subfamily. Heterodimer of a large membrane-associated beta subunit and a small pyruvoyl-containing alpha subunit. Requires pyruvate as cofactor. Is synthesized initially as an inactive proenzyme. Formation of the active enzyme involves a self-maturation process in which the active site pyruvoyl group is generated from an internal serine residue via an autocatalytic post-translational modification. Two non-identical subunits are generated from the proenzyme in this reaction, and the pyruvate is formed at the N-terminus of the alpha chain, which is derived from the carboxyl end of the proenzyme. The autoendoproteolytic cleavage occurs by a canonical serine protease mechanism, in which the side chain hydroxyl group of the serine supplies its oxygen atom to form the C-terminus of the beta chain, while the remainder of the serine residue undergoes an oxidative deamination to produce ammonia and the pyruvoyl prosthetic group on the alpha chain. During this reaction, the Ser that is part of the protease active site of the proenzyme becomes the pyruvoyl prosthetic group, which constitutes an essential element of the active site of the mature decarboxylase.

It localises to the cell membrane. The catalysed reaction is a 1,2-diacyl-sn-glycero-3-phospho-L-serine + H(+) = a 1,2-diacyl-sn-glycero-3-phosphoethanolamine + CO2. The protein operates within phospholipid metabolism; phosphatidylethanolamine biosynthesis; phosphatidylethanolamine from CDP-diacylglycerol: step 2/2. Functionally, catalyzes the formation of phosphatidylethanolamine (PtdEtn) from phosphatidylserine (PtdSer). The chain is Phosphatidylserine decarboxylase proenzyme from Saccharophagus degradans (strain 2-40 / ATCC 43961 / DSM 17024).